We begin with the raw amino-acid sequence, 139 residues long: Small ribosomal subunit protein uS11A (139 aa).

A disordered region spans residues 119–139; sequence DVTPIPTDSTRRKGGRRGRRL. The segment covering 130–139 has biased composition (basic residues); sequence RKGGRRGRRL.

The protein belongs to the universal ribosomal protein uS11 family. As to quaternary structure, component of the small ribosomal subunit (SSU). Mature yeast ribosomes consist of a small (40S) and a large (60S) subunit. The 40S small subunit contains 1 molecule of ribosomal RNA (18S rRNA) and at least 33 different proteins. The large 60S subunit contains 3 rRNA molecules (25S, 5.8S and 5S rRNA) and at least 46 different proteins. uS11 interacts with eS1 forming part of the mRNA exit tunnel. uS11 interacts with snoRNA U3. uS11 interacts with MPP10. Component of the ribosomal small subunit (SSU) processome composed of at least 40 protein subunits and snoRNA U3.

The protein resides in the cytoplasm. Its subcellular location is the nucleus. The protein localises to the nucleolus. Functionally, component of the ribosome, a large ribonucleoprotein complex responsible for the synthesis of proteins in the cell. The small ribosomal subunit (SSU) binds messenger RNAs (mRNAs) and translates the encoded message by selecting cognate aminoacyl-transfer RNA (tRNA) molecules. The large subunit (LSU) contains the ribosomal catalytic site termed the peptidyl transferase center (PTC), which catalyzes the formation of peptide bonds, thereby polymerizing the amino acids delivered by tRNAs into a polypeptide chain. The nascent polypeptides leave the ribosome through a tunnel in the LSU and interact with protein factors that function in enzymatic processing, targeting, and the membrane insertion of nascent chains at the exit of the ribosomal tunnel. uS11 is involved in nucleolar processing of pre-18S ribosomal RNA and ribosome assembly. This is Small ribosomal subunit protein uS11A (rps1401) from Schizosaccharomyces pombe (strain 972 / ATCC 24843) (Fission yeast).